The sequence spans 599 residues: Proteasome-associated ATPase (599 aa).

The segment at 1–22 (MPHGHPGSQPDEGGELSNGSSS) is disordered. Positions 21-97 (SSGELTAQIR…LREEVDRLAQ (77 aa)) form a coiled coil. 286–291 (GCGKTL) is an ATP binding site. The segment at 598–599 (YL) is docks into pockets in the proteasome alpha-ring.

Belongs to the AAA ATPase family. As to quaternary structure, homohexamer. Assembles into a hexameric ring structure that caps the 20S proteasome core. Strongly interacts with the prokaryotic ubiquitin-like protein Pup through a hydrophobic interface; the interacting region of ARC lies in its N-terminal coiled-coil domain. There is one Pup binding site per ARC hexamer ring. Upon ATP-binding, the C-terminus of ARC interacts with the alpha-rings of the proteasome core, possibly by binding to the intersubunit pockets.

It participates in protein degradation; proteasomal Pup-dependent pathway. Functionally, ATPase which is responsible for recognizing, binding, unfolding and translocation of pupylated proteins into the bacterial 20S proteasome core particle. May be essential for opening the gate of the 20S proteasome via an interaction with its C-terminus, thereby allowing substrate entry and access to the site of proteolysis. Thus, the C-termini of the proteasomal ATPase may function like a 'key in a lock' to induce gate opening and therefore regulate proteolysis. This chain is Proteasome-associated ATPase, found in Actinosynnema mirum (strain ATCC 29888 / DSM 43827 / JCM 3225 / NBRC 14064 / NCIMB 13271 / NRRL B-12336 / IMRU 3971 / 101).